The primary structure comprises 108 residues: Long neurotoxin 13 (108 aa).

A signal peptide spans Met1–Thr21. 5 disulfides stabilise this stretch: Cys24-Cys42, Cys35-Cys63, Cys48-Cys52, Cys67-Cys78, and Cys79-Cys84.

The protein belongs to the three-finger toxin family. Long-chain subfamily. Type II alpha-neurotoxin sub-subfamily. As to expression, expressed by the venom gland.

Its subcellular location is the secreted. In terms of biological role, binds with high affinity to muscular (alpha-1/CHRNA1) and neuronal (alpha-7/CHRNA7) nicotinic acetylcholine receptor (nAChR) and inhibits acetylcholine from binding to the receptor, thereby impairing neuromuscular and neuronal transmission. The chain is Long neurotoxin 13 from Drysdalia coronoides (White-lipped snake).